An 81-amino-acid chain; its full sequence is Cytotoxin 8 (81 aa).

Positions 1–21 (MKTLLLTLVVVTIVCLDLGYT) are cleaved as a signal peptide. Intrachain disulfides connect Cys24/Cys42, Cys35/Cys59, Cys63/Cys74, and Cys75/Cys80.

Belongs to the three-finger toxin family. Short-chain subfamily. Type IA cytotoxin sub-subfamily. Monomer in solution; Homodimer and oligomer in the presence of negatively charged lipids forming a pore with a size ranging between 20 and 30 Angstroms. In terms of tissue distribution, expressed by the venom gland.

Its subcellular location is the secreted. The protein resides in the target cell membrane. Shows cytolytic activity on many different cells by forming pore in lipid membranes. In vivo, increases heart rate or kills the animal by cardiac arrest. In addition, it binds to heparin with high affinity, interacts with Kv channel-interacting protein 1 (KCNIP1) in a calcium-independent manner, and binds to integrin alpha-V/beta-3 (ITGAV/ITGB3) with moderate affinity. The sequence is that of Cytotoxin 8 from Naja atra (Chinese cobra).